A 443-amino-acid chain; its full sequence is MSEMTPREIVHELDRHIIGQDKAKRAVAIALRNRWRRMQLPEELRVEVTPKNILMIGPTGVGKTEIARRLAKLANAPFIKVEATKFTEVGYVGKEVETIIRDLTDVAVKMTHQQAMSKVQFRAEELAEDRILDILLPPARDQWGQNEENDTDSSTRQSFRKKLREGKLDDKEIEMDIAAPQMGVEIMAPPGMEDMTNQLQGMFQNLAGNTSKKRKMKIKDAIKAATEEEAAKLVNQEELKEQAIFSVENNGIVFLDEIDKICKRGDSSGPDVSREGVQRDLLPLVEGSTVSTKHGMVKTDHILFVASGAFQMSKPSDLIPELQGRLPIRVELEALTSHDFKRILTEPKASLTEQYKALMATESVNIDFSEDGINKIADAAWQVNERTENIGARRLHTVMERLMEELSFDATDRSDELLIIDEAYVNERLDELVENEDLSRFIL.

Residues I18 and 60–65 (GVGKTE) contribute to the ATP site. The tract at residues 141–165 (DQWGQNEENDTDSSTRQSFRKKLRE) is disordered. The ATP site is built by D256, E321, and R393.

Belongs to the ClpX chaperone family. HslU subfamily. A double ring-shaped homohexamer of HslV is capped on each side by a ring-shaped HslU homohexamer. The assembly of the HslU/HslV complex is dependent on binding of ATP.

Its subcellular location is the cytoplasm. Its function is as follows. ATPase subunit of a proteasome-like degradation complex; this subunit has chaperone activity. The binding of ATP and its subsequent hydrolysis by HslU are essential for unfolding of protein substrates subsequently hydrolyzed by HslV. HslU recognizes the N-terminal part of its protein substrates and unfolds these before they are guided to HslV for hydrolysis. This chain is ATP-dependent protease ATPase subunit HslU, found in Photobacterium profundum (strain SS9).